Reading from the N-terminus, the 199-residue chain is ATP-dependent Clp protease proteolytic subunit (199 aa).

The Nucleophile role is filled by serine 98. Histidine 123 is an active-site residue.

Belongs to the peptidase S14 family. In terms of assembly, fourteen ClpP subunits assemble into 2 heptameric rings which stack back to back to give a disk-like structure with a central cavity, resembling the structure of eukaryotic proteasomes.

Its subcellular location is the cytoplasm. It catalyses the reaction Hydrolysis of proteins to small peptides in the presence of ATP and magnesium. alpha-casein is the usual test substrate. In the absence of ATP, only oligopeptides shorter than five residues are hydrolyzed (such as succinyl-Leu-Tyr-|-NHMec, and Leu-Tyr-Leu-|-Tyr-Trp, in which cleavage of the -Tyr-|-Leu- and -Tyr-|-Trp bonds also occurs).. Functionally, cleaves peptides in various proteins in a process that requires ATP hydrolysis. Has a chymotrypsin-like activity. Plays a major role in the degradation of misfolded proteins. The sequence is that of ATP-dependent Clp protease proteolytic subunit from Clostridium botulinum (strain Eklund 17B / Type B).